Reading from the N-terminus, the 234-residue chain is Leucyl/phenylalanyl-tRNA--protein transferase (234 aa).

This sequence belongs to the L/F-transferase family.

The protein resides in the cytoplasm. The enzyme catalyses N-terminal L-lysyl-[protein] + L-leucyl-tRNA(Leu) = N-terminal L-leucyl-L-lysyl-[protein] + tRNA(Leu) + H(+). It carries out the reaction N-terminal L-arginyl-[protein] + L-leucyl-tRNA(Leu) = N-terminal L-leucyl-L-arginyl-[protein] + tRNA(Leu) + H(+). It catalyses the reaction L-phenylalanyl-tRNA(Phe) + an N-terminal L-alpha-aminoacyl-[protein] = an N-terminal L-phenylalanyl-L-alpha-aminoacyl-[protein] + tRNA(Phe). In terms of biological role, functions in the N-end rule pathway of protein degradation where it conjugates Leu, Phe and, less efficiently, Met from aminoacyl-tRNAs to the N-termini of proteins containing an N-terminal arginine or lysine. This chain is Leucyl/phenylalanyl-tRNA--protein transferase, found in Klebsiella pneumoniae (strain 342).